A 510-amino-acid polypeptide reads, in one-letter code: Cytochrome P450 monooxygenase AFLA_114810 (510 aa).

A signal peptide spans 1–17; that stretch reads MLILLGLLCLYTGLYVA. Residue C444 coordinates heme.

This sequence belongs to the cytochrome P450 family. It depends on heme as a cofactor.

It participates in secondary metabolite biosynthesis. Functionally, cytochrome P450 monooxygenase; part of the gene cluster 41 that mediates the biosynthesis of an extracellular and diffusible metabolite that is able to stimulate colony sclerotial production. The sequence is that of Cytochrome P450 monooxygenase AFLA_114810 from Aspergillus flavus (strain ATCC 200026 / FGSC A1120 / IAM 13836 / NRRL 3357 / JCM 12722 / SRRC 167).